We begin with the raw amino-acid sequence, 67 residues long: Prokaryotic ubiquitin-like protein Pup (67 aa).

Positions 1 to 36 (MPQQFEQPQAQQAVTQEDDALATTQAATQTESTDQA) are enriched in low complexity. The segment at 1–38 (MPQQFEQPQAQQAVTQEDDALATTQAATQTESTDQADV) is disordered. The segment at 23–61 (TTQAATQTESTDQADVLDDILDDIESTLETNAEEYVNSF) is ARC ATPase binding. Glu67 is covalently cross-linked (Isoglutamyl lysine isopeptide (Glu-Lys) (interchain with K-? in acceptor proteins)).

This sequence belongs to the prokaryotic ubiquitin-like protein family. Strongly interacts with the proteasome-associated ATPase ARC through a hydrophobic interface; the interacting region of Pup lies in its C-terminal half. There is one Pup binding site per ARC hexamer ring.

Its pathway is protein degradation; proteasomal Pup-dependent pathway. Protein modifier that is covalently attached to lysine residues of substrate proteins, thereby targeting them for proteasomal degradation. The tagging system is termed pupylation. The protein is Prokaryotic ubiquitin-like protein Pup of Bifidobacterium longum subsp. infantis (strain ATCC 15697 / DSM 20088 / JCM 1222 / NCTC 11817 / S12).